Here is a 100-residue protein sequence, read N- to C-terminus: Small ribosomal subunit protein uS14c (100 aa).

It belongs to the universal ribosomal protein uS14 family. Part of the 30S ribosomal subunit.

The protein localises to the plastid. Its function is as follows. Binds 16S rRNA, required for the assembly of 30S particles. This chain is Small ribosomal subunit protein uS14c, found in Aneura mirabilis (Parasitic liverwort).